A 757-amino-acid polypeptide reads, in one-letter code: Endosialin (757 aa).

A signal peptide spans M1–G17. Residues Q18–L687 lie on the Extracellular side of the membrane. The C-type lectin domain occupies G30–C156. O-linked (GalNAc...) threonine glycosylation is present at T60. A disulfide bridge connects residues C131 and C147. Residues G162–G232 enclose the Sushi domain. Residues D312 to S351 enclose the EGF-like; calcium-binding domain. Intrachain disulfides connect C316–C326, C322–C335, and C337–C350. Residues T401, T428, T448, T456, T459, T472, T519, T541, T543, T544, T545, T587, T593, T594, and T595 are each glycosylated (O-linked (GalNAc...) threonine). Residues S598 and S601 are each glycosylated (O-linked (GalNAc...) serine). O-linked (GalNAc...) threonine glycans are attached at residues T612 and T619. The span at P618 to T627 shows a compositional bias: low complexity. Residues P618–P662 are disordered. 2 O-linked (GalNAc...) serine glycosylation sites follow: S623 and S625. 2 O-linked (GalNAc...) threonine glycosylation sites follow: T627 and T630. An O-linked (GalNAc...) serine glycan is attached at S631. T636 carries an O-linked (GalNAc...) threonine glycan. O-linked (GalNAc...) serine glycosylation is present at S640. Residues L688 to V708 traverse the membrane as a helical segment. Topologically, residues Y709 to V757 are cytoplasmic. A disordered region spans residues P737–V757. At S746 the chain carries Phosphoserine. The span at T748–V757 shows a compositional bias: polar residues.

In terms of assembly, interacts with PDGFRA; this interaction promotes PDGF receptor signaling pathway. Interacts with integrin beta-1/ITGB1. Interacts with insulin receptor/INSR; this interaction diminishes INSR autophosphorylation. In terms of processing, O-glycosylated with sialylated oligosaccharides. Post-translationally, may be N-glycosylated. Expressed in tumor endothelial cells but absent or barely detectable in normal endothelial cells. Expressed in metastatic lesions of the liver and during angiogenesis of corpus luteum formation and wound healing. Expressed in vascular endothelial cells of malignant tumors but not in normal blood vessels. Expressed in stromal fibroblasts. Strongly expressed in pericytes. Expressed on stromal cells and cells with lymphoid morphology such a T-cells.

The protein localises to the membrane. Functionally, cell surface glycoprotein involved in various biological processes including angiogenesis, immune response modulation, and tissue remodeling and repair. Participates in pericyte proliferation through positive modulation of the PDGF receptor signaling pathway. Acts as a scaffold for factor X, triggering allosteric changes and the spatial re-alignment of factor X with the TF-factor VIIa complex, thereby enhancing coagulation activation. Modulates the insulin signaling pathway by interacting with insulin receptor/INSR and by diminishing its capacity to be autophosphorylated in response to insulin. Also regulates LPS-induced inflammatory response in macrophages by favoring the production of proinflammatory cytokines. In human, negatively regulates T-cell proliferation compared with stromal cells where it increases proliferation. The polypeptide is Endosialin (CD248) (Homo sapiens (Human)).